Here is a 742-residue protein sequence, read N- to C-terminus: Zinc finger MYND domain-containing protein 15 (742 aa).

Residues 109 to 199 (LEDGEEGEEE…QKRKGQRSEA (91 aa)) are disordered. The segment covering 110 to 127 (EDGEEGEEEEEEDEEEEK) has biased composition (acidic residues). Residues 151–161 (SRESPQETNPP) are compositionally biased toward polar residues. Positions 166–189 (EAAREAGGGKDGCREDRVENETRP) are enriched in basic and acidic residues. Positions 313, 316, 328, 331, 337, 341, 355, and 359 each coordinate Zn(2+). The segment at 313 to 359 (CHVCHRHSFEAKLTPCPQCSAVLYCGEACLRADWQRCPDDVSHRFWC) adopts an MYND-type zinc-finger fold. 2 disordered regions span residues 565 to 590 (EVSV…GRRD) and 701 to 742 (QGSG…RRRK). Pro residues predominate over residues 708–724 (APGPPPPSPTPSAPPAP). Positions 725–742 (TRRRRGEKKPGRGARRRK) are enriched in basic residues.

Interacts with HDAC1, HDAC3, HDAC6 and, to a lesser extent, with HDAC7.

It localises to the nucleus. The protein localises to the cytoplasm. In terms of biological role, acts as a transcriptional repressor through interaction with histone deacetylases (HDACs). May be important for spermiogenesis. The protein is Zinc finger MYND domain-containing protein 15 (ZMYND15) of Homo sapiens (Human).